Here is a 22-residue protein sequence, read N- to C-terminus: Cysteine-rich venom protein notescatin (22 aa).

Residues 1-15 show a composition bias toward basic and acidic residues; the sequence is SNKKDYQKEIVDKHN. The disordered stretch occupies residues 1–22; it reads SNKKDYQKEIVDKHNALRRSVK.

The protein belongs to the CRISP family. Post-translationally, contains 8 disulfide bonds. In terms of tissue distribution, expressed by the venom gland.

Its subcellular location is the secreted. The protein is Cysteine-rich venom protein notescatin of Notechis scutatus scutatus (Mainland tiger snake).